Reading from the N-terminus, the 149-residue chain is Hut operon positive regulatory protein (149 aa).

This sequence belongs to the HutP family. Homohexamer.

Functionally, antiterminator that binds to cis-acting regulatory sequences on the mRNA in the presence of histidine, thereby suppressing transcription termination and activating the hut operon for histidine utilization. This chain is Hut operon positive regulatory protein, found in Geobacillus thermodenitrificans (strain NG80-2).